Here is a 469-residue protein sequence, read N- to C-terminus: Glutamate--tRNA ligase (469 aa).

The 'HIGH' region motif lies at 11–21; that stretch reads PSPTGFIHLGN. A compositionally biased stretch (basic and acidic residues) spans 118–131; it reads GEKPRYDGTWRPEP. The interval 118 to 138 is disordered; the sequence is GEKPRYDGTWRPEPGKVLPEP. Positions 243 to 247 match the 'KMSKS' region motif; it reads KMSKR. Lys-246 lines the ATP pocket.

It belongs to the class-I aminoacyl-tRNA synthetase family. Glutamate--tRNA ligase type 1 subfamily. Monomer.

It localises to the cytoplasm. The catalysed reaction is tRNA(Glu) + L-glutamate + ATP = L-glutamyl-tRNA(Glu) + AMP + diphosphate. Catalyzes the attachment of glutamate to tRNA(Glu) in a two-step reaction: glutamate is first activated by ATP to form Glu-AMP and then transferred to the acceptor end of tRNA(Glu). This Burkholderia thailandensis (strain ATCC 700388 / DSM 13276 / CCUG 48851 / CIP 106301 / E264) protein is Glutamate--tRNA ligase.